A 28-amino-acid polypeptide reads, in one-letter code: Cyclotide ltri-A (28 aa).

The segment at residues 1–28 is a cross-link (cyclopeptide (Gly-Asn)); the sequence is GVACGESCVYLPCFTVGCTCTSSQCFKN. 3 disulfide bridges follow: Cys-4–Cys-18, Cys-8–Cys-20, and Cys-13–Cys-25.

The protein belongs to the cyclotide family. Bracelet subfamily. This is a cyclic peptide.

Its function is as follows. Probably participates in a plant defense mechanism. The sequence is that of Cyclotide ltri-A from Leonia triandra.